We begin with the raw amino-acid sequence, 902 residues long: Tiger protein B1 (902 aa).

A signal peptide spans 1–24 (MKVIYIYLLLLLVCKFLFVKSSCS). At 25–803 (LKVGKIECTK…IIYSENKSTG (779 aa)) the chain is on the extracellular side. N-linked (GlcNAc...) asparagine glycans are attached at residues asparagine 43, asparagine 144, asparagine 184, asparagine 223, asparagine 272, asparagine 279, asparagine 288, asparagine 358, asparagine 389, asparagine 398, asparagine 437, asparagine 559, asparagine 628, asparagine 644, asparagine 706, asparagine 753, asparagine 764, asparagine 771, and asparagine 799. Positions 249-323 (MEGVLNDNGG…ITIDGEYKSN (75 aa)) constitute an IPT/TIG 1 domain. IPT/TIG domains follow at residues 603–680 (PIIE…ISSS) and 704–788 (ITNT…IFQF). A helical transmembrane segment spans residues 804-824 (FPNEMYLGFVVFVIFIALISF). Residues 825–902 (AAKNQIEKYF…IRRCFKEHTD (78 aa)) lie on the Cytoplasmic side of the membrane.

It localises to the cell membrane. Functionally, tgrB1 and tgrC1 are involved in kin discrimination. They play an essential role in aggregation and subsequent development. This chain is Tiger protein B1 (tgrB1), found in Dictyostelium discoideum (Social amoeba).